A 325-amino-acid polypeptide reads, in one-letter code: GMP reductase (325 aa).

The active-site Thioimidate intermediate is Cys-173. NADP(+) is bound at residue 202-225; sequence IIADGGIHEHGDIAKSIRFGATMV.

This sequence belongs to the IMPDH/GMPR family. GuaC type 2 subfamily.

The enzyme catalyses IMP + NH4(+) + NADP(+) = GMP + NADPH + 2 H(+). In terms of biological role, catalyzes the irreversible NADPH-dependent deamination of GMP to IMP. It functions in the conversion of nucleobase, nucleoside and nucleotide derivatives of G to A nucleotides, and in maintaining the intracellular balance of A and G nucleotides. The polypeptide is GMP reductase (Albidiferax ferrireducens (strain ATCC BAA-621 / DSM 15236 / T118) (Rhodoferax ferrireducens)).